Consider the following 492-residue polypeptide: Glutamyl-tRNA(Gln) amidotransferase subunit B, mitochondrial (492 aa).

It belongs to the GatB/GatE family. GatB subfamily. Subunit of the heterotrimeric GatFAB amidotransferase (AdT) complex, composed of A, B and F subunits.

It is found in the mitochondrion. It catalyses the reaction L-glutamyl-tRNA(Gln) + L-glutamine + ATP + H2O = L-glutaminyl-tRNA(Gln) + L-glutamate + ADP + phosphate + H(+). In terms of biological role, allows the formation of correctly charged Gln-tRNA(Gln) through the transamidation of misacylated Glu-tRNA(Gln) in the mitochondria. The reaction takes place in the presence of glutamine and ATP through an activated gamma-phospho-Glu-tRNA(Gln). In Komagataella phaffii (strain GS115 / ATCC 20864) (Yeast), this protein is Glutamyl-tRNA(Gln) amidotransferase subunit B, mitochondrial.